The chain runs to 478 residues: NADH-ubiquinone oxidoreductase 49 kDa subunit, mitochondrial (478 aa).

The transit peptide at 1–42 (MATTLFRLAGRNAKRHCMRQSTTIAHNLNSTRAFSASALRRY) directs the protein to the mitochondrion. 3 residues coordinate [4Fe-4S] cluster: cysteine 341, cysteine 347, and cysteine 362.

The protein belongs to the complex I 49 kDa subunit family. As to quaternary structure, complex I is composed of about 40 different subunits. It depends on [4Fe-4S] cluster as a cofactor.

It localises to the mitochondrion inner membrane. It carries out the reaction a ubiquinone + NADH + 5 H(+)(in) = a ubiquinol + NAD(+) + 4 H(+)(out). Functionally, core subunit of the mitochondrial membrane respiratory chain NADH dehydrogenase (Complex I) that is believed to belong to the minimal assembly required for catalysis. Complex I functions in the transfer of electrons from NADH to the respiratory chain. The immediate electron acceptor for the enzyme is believed to be ubiquinone. The chain is NADH-ubiquinone oxidoreductase 49 kDa subunit, mitochondrial (nuo-49) from Neurospora crassa (strain ATCC 24698 / 74-OR23-1A / CBS 708.71 / DSM 1257 / FGSC 987).